The chain runs to 370 residues: Forkhead box protein J1.2 (370 aa).

The interval Ala-45–Thr-74 is disordered. The segment at residues Lys-108 to Met-202 is a DNA-binding region (fork-head). A disordered region spans residues Pro-227 to Glu-246.

The protein belongs to the FOXJ1 family.

The protein resides in the nucleus. Functionally, key transcription factor required for motile ciliogenesis. Activates genes essential for motile cilia formation and function. This chain is Forkhead box protein J1.2, found in Xenopus laevis (African clawed frog).